We begin with the raw amino-acid sequence, 246 residues long: NH(3)-dependent NAD(+) synthetase (246 aa).

ATP is bound at residue 29–36 (GLSGGIDS). Aspartate 35 contacts Mg(2+). Position 110 (arginine 110) interacts with deamido-NAD(+). Threonine 130 lines the ATP pocket. Mg(2+) is bound at residue glutamate 135. Residues lysine 159 and serine 181 each contribute to the ATP site.

This sequence belongs to the NAD synthetase family. Homodimer.

It carries out the reaction deamido-NAD(+) + NH4(+) + ATP = AMP + diphosphate + NAD(+) + H(+). It participates in cofactor biosynthesis; NAD(+) biosynthesis; NAD(+) from deamido-NAD(+) (ammonia route): step 1/1. Catalyzes the ATP-dependent amidation of deamido-NAD to form NAD. Uses ammonia as a nitrogen source. The chain is NH(3)-dependent NAD(+) synthetase from Campylobacter jejuni subsp. jejuni serotype O:23/36 (strain 81-176).